Reading from the N-terminus, the 694-residue chain is Elongation factor G (694 aa).

The tr-type G domain maps to 8–282; that stretch reads DRLRNIGIMA…AIVDYLPSPL (275 aa). GTP contacts are provided by residues 17–24, 81–85, and 135–138; these read AHIDAGKT, DTPGH, and NKMD. The disordered stretch occupies residues 284–303; that stretch reads IPPVQGTDPETGEPAERKAD.

It belongs to the TRAFAC class translation factor GTPase superfamily. Classic translation factor GTPase family. EF-G/EF-2 subfamily.

The protein localises to the cytoplasm. In terms of biological role, catalyzes the GTP-dependent ribosomal translocation step during translation elongation. During this step, the ribosome changes from the pre-translocational (PRE) to the post-translocational (POST) state as the newly formed A-site-bound peptidyl-tRNA and P-site-bound deacylated tRNA move to the P and E sites, respectively. Catalyzes the coordinated movement of the two tRNA molecules, the mRNA and conformational changes in the ribosome. This chain is Elongation factor G, found in Symbiobacterium thermophilum (strain DSM 24528 / JCM 14929 / IAM 14863 / T).